The primary structure comprises 89 residues: UPF0250 protein Bphy_0213 (89 aa).

It belongs to the UPF0250 family.

The polypeptide is UPF0250 protein Bphy_0213 (Paraburkholderia phymatum (strain DSM 17167 / CIP 108236 / LMG 21445 / STM815) (Burkholderia phymatum)).